We begin with the raw amino-acid sequence, 109 residues long: Nucleoid-associated protein APL_0075 (109 aa).

Positions 1–21 (MFGKGGLGGLMKQAQQMQERM) are disordered. Over residues 10–19 (LMKQAQQMQE) the composition is skewed to low complexity.

The protein belongs to the YbaB/EbfC family. As to quaternary structure, homodimer.

The protein localises to the cytoplasm. Its subcellular location is the nucleoid. Its function is as follows. Binds to DNA and alters its conformation. May be involved in regulation of gene expression, nucleoid organization and DNA protection. In Actinobacillus pleuropneumoniae serotype 5b (strain L20), this protein is Nucleoid-associated protein APL_0075.